The chain runs to 956 residues: Probable hypoxanthine oxidase XdhD (956 aa).

Mo-molybdopterin is bound by residues Gln-414, Phe-445, and Ala-727.

It belongs to the xanthine dehydrogenase family. [2Fe-2S] cluster serves as cofactor. It depends on Mo-molybdopterin as a cofactor.

Probably has no xanthine dehydrogenase activity; however deletion results in increased adenine sensitivity, suggesting that this protein contributes to the conversion of adenine to guanine nucleotides during purine salvage. The sequence is that of Probable hypoxanthine oxidase XdhD (xdhD) from Escherichia coli (strain K12).